The following is a 187-amino-acid chain: 1,6-anhydro-N-acetylmuramyl-L-alanine amidase AmpD (187 aa).

The 139-residue stretch at 29 to 167 folds into the N-acetylmuramoyl-L-alanine amidase domain; the sequence is SLLVVHNISL…APDRKTDPGP (139 aa). Histidine 34 provides a ligand contact to Zn(2+). Catalysis depends on glutamate 116, which acts as the Proton acceptor. The Zn(2+) site is built by histidine 154 and aspartate 164.

Belongs to the N-acetylmuramoyl-L-alanine amidase 2 family. Requires Zn(2+) as cofactor.

The protein resides in the cytoplasm. It catalyses the reaction Hydrolyzes the link between N-acetylmuramoyl residues and L-amino acid residues in certain cell-wall glycopeptides.. In terms of biological role, involved in cell wall peptidoglycan recycling. Specifically cleaves the amide bond between the lactyl group of N-acetylmuramic acid and the alpha-amino group of the L-alanine in degradation products containing an anhydro N-acetylmuramyl moiety. This is 1,6-anhydro-N-acetylmuramyl-L-alanine amidase AmpD (ampD) from Salmonella typhimurium (strain SL1344).